The primary structure comprises 571 residues: Sulfite reductase [NADPH] hemoprotein beta-component (571 aa).

[4Fe-4S] cluster is bound by residues cysteine 436, cysteine 442, cysteine 481, and cysteine 485. Cysteine 485 serves as a coordination point for siroheme.

The protein belongs to the nitrite and sulfite reductase 4Fe-4S domain family. In terms of assembly, alpha(8)-beta(8). The alpha component is a flavoprotein, the beta component is a hemoprotein. It depends on siroheme as a cofactor. [4Fe-4S] cluster serves as cofactor.

The enzyme catalyses hydrogen sulfide + 3 NADP(+) + 3 H2O = sulfite + 3 NADPH + 4 H(+). The protein operates within sulfur metabolism; hydrogen sulfide biosynthesis; hydrogen sulfide from sulfite (NADPH route): step 1/1. Component of the sulfite reductase complex that catalyzes the 6-electron reduction of sulfite to sulfide. This is one of several activities required for the biosynthesis of L-cysteine from sulfate. This Bacillus subtilis (strain 168) protein is Sulfite reductase [NADPH] hemoprotein beta-component (cysI).